The primary structure comprises 423 residues: Glucose-1-phosphate adenylyltransferase (423 aa).

Alpha-D-glucose 1-phosphate is bound by residues Tyr-108, Gly-173, Glu-188 to Lys-189, and Ser-207.

Belongs to the bacterial/plant glucose-1-phosphate adenylyltransferase family. In terms of assembly, homotetramer.

The enzyme catalyses alpha-D-glucose 1-phosphate + ATP + H(+) = ADP-alpha-D-glucose + diphosphate. It participates in glycan biosynthesis; glycogen biosynthesis. Functionally, involved in the biosynthesis of ADP-glucose, a building block required for the elongation reactions to produce glycogen. Catalyzes the reaction between ATP and alpha-D-glucose 1-phosphate (G1P) to produce pyrophosphate and ADP-Glc. In Francisella tularensis subsp. holarctica (strain FTNF002-00 / FTA), this protein is Glucose-1-phosphate adenylyltransferase.